The primary structure comprises 209 residues: Large ribosomal subunit protein uL3 (209 aa).

Residues 112–122 (GTTRGHGTQGN) are compositionally biased toward polar residues. The tract at residues 112-146 (GTTRGHGTQGNIKRWGQSRGPETHGSRYHRIPGSM) is disordered.

This sequence belongs to the universal ribosomal protein uL3 family. As to quaternary structure, part of the 50S ribosomal subunit. Forms a cluster with proteins L14 and L19.

In terms of biological role, one of the primary rRNA binding proteins, it binds directly near the 3'-end of the 23S rRNA, where it nucleates assembly of the 50S subunit. This chain is Large ribosomal subunit protein uL3, found in Lactobacillus johnsonii (strain CNCM I-12250 / La1 / NCC 533).